Reading from the N-terminus, the 136-residue chain is NADH-ubiquinone oxidoreductase chain 2 (136 aa).

4 helical membrane passes run 12-32 (YFLI…NQSF), 34-54 (FLIP…MWLV), 74-94 (IGPL…WLMV), and 99-119 (FLLM…AVIL).

This sequence belongs to the complex I subunit 2 family.

The protein localises to the mitochondrion inner membrane. It catalyses the reaction a ubiquinone + NADH + 5 H(+)(in) = a ubiquinol + NAD(+) + 4 H(+)(out). In terms of biological role, core subunit of the mitochondrial membrane respiratory chain NADH dehydrogenase (Complex I) that is believed to belong to the minimal assembly required for catalysis. Complex I functions in the transfer of electrons from NADH to the respiratory chain. The immediate electron acceptor for the enzyme is believed to be ubiquinone. The sequence is that of NADH-ubiquinone oxidoreductase chain 2 (ND2) from Artemia salina (Brine shrimp).